Here is a 327-residue protein sequence, read N- to C-terminus: tRNA pseudouridine synthase B (327 aa).

Asp83 serves as the catalytic Nucleophile.

The protein belongs to the pseudouridine synthase TruB family. Type 1 subfamily.

The catalysed reaction is uridine(55) in tRNA = pseudouridine(55) in tRNA. In terms of biological role, responsible for synthesis of pseudouridine from uracil-55 in the psi GC loop of transfer RNAs. In Mesomycoplasma hyopneumoniae (strain 232) (Mycoplasma hyopneumoniae), this protein is tRNA pseudouridine synthase B.